The following is a 452-amino-acid chain: UDP-N-acetylmuramoylalanine--D-glutamate ligase (452 aa).

119-125 is a binding site for ATP; that stretch reads GSNGKTT.

Belongs to the MurCDEF family.

Its subcellular location is the cytoplasm. It carries out the reaction UDP-N-acetyl-alpha-D-muramoyl-L-alanine + D-glutamate + ATP = UDP-N-acetyl-alpha-D-muramoyl-L-alanyl-D-glutamate + ADP + phosphate + H(+). It participates in cell wall biogenesis; peptidoglycan biosynthesis. In terms of biological role, cell wall formation. Catalyzes the addition of glutamate to the nucleotide precursor UDP-N-acetylmuramoyl-L-alanine (UMA). This Streptococcus pyogenes serotype M2 (strain MGAS10270) protein is UDP-N-acetylmuramoylalanine--D-glutamate ligase.